The chain runs to 223 residues: ATP synthase subunit a 1 (223 aa).

The next 5 helical transmembrane spans lie at 20-40 (LTIA…AFAS), 78-98 (YLPY…CTII), 108-128 (LSTT…FGIA), 174-194 (MILA…MSVL), and 196-216 (LLTG…YISA).

The protein belongs to the ATPase A chain family. F-type ATPases have 2 components, CF(1) - the catalytic core - and CF(0) - the membrane proton channel. CF(1) has five subunits: alpha(3), beta(3), gamma(1), delta(1), epsilon(1). CF(0) has four main subunits: a, b, b' and c.

The protein localises to the cell inner membrane. Its function is as follows. Key component of the proton channel; it plays a direct role in the translocation of protons across the membrane. This Chlorobium luteolum (strain DSM 273 / BCRC 81028 / 2530) (Pelodictyon luteolum) protein is ATP synthase subunit a 1.